The primary structure comprises 345 residues: Phosphoribosylformylglycinamidine cyclo-ligase (345 aa).

The protein belongs to the AIR synthase family.

The protein resides in the cytoplasm. The catalysed reaction is 2-formamido-N(1)-(5-O-phospho-beta-D-ribosyl)acetamidine + ATP = 5-amino-1-(5-phospho-beta-D-ribosyl)imidazole + ADP + phosphate + H(+). Its pathway is purine metabolism; IMP biosynthesis via de novo pathway; 5-amino-1-(5-phospho-D-ribosyl)imidazole from N(2)-formyl-N(1)-(5-phospho-D-ribosyl)glycinamide: step 2/2. This is Phosphoribosylformylglycinamidine cyclo-ligase from Shewanella woodyi (strain ATCC 51908 / MS32).